Consider the following 1105-residue polypeptide: Probable diguanylate cyclase DgcE (1105 aa).

10 helical membrane passes run 9 to 29 (LIAL…SFIF), 38 to 58 (QFGT…VAFY), 64 to 84 (MWPG…ILLF), 88 to 108 (SLNM…AVLL), 127 to 147 (LALG…VLLT), 156 to 176 (FLIW…LGLL), 190 to 207 (LLFE…LSWL), 211 to 228 (YLPW…WSAV), 236 to 256 (FLIF…DPSL), and 270 to 290 (WLPF…MYAF). One can recognise a PAS 1 domain in the interval 300 to 370 (SETHFRNAME…QQVEKLISGE (71 aa)). PAC domains lie at 374 to 426 (YSME…VNQQ) and 501 to 552 (FKLE…ALFQ). Positions 553 to 623 (EKERLHITLD…LMENIYSADT (71 aa)) constitute a PAS 2 domain. The PAC 3 domain occupies 626–680 (SAIEQDVVLHCRSGGSYDVHYSITPLSTLDGSNIGSVLVIQDVTESRKMLRQLSY). Positions 712–845 (QRHALVFIDL…GRGRVTVYEP (134 aa)) constitute a GGDEF domain. Residue aspartate 720 coordinates Mg(2+). Asparagine 728, histidine 733, and aspartate 737 together coordinate substrate. Aspartate 763 serves as a coordination point for Mg(2+). The Proton acceptor role is filled by aspartate 763. Arginine 783 provides a ligand contact to substrate. Positions 855–1104 (AAMSLDEQWR…LLVNSSYFAI (250 aa)) constitute an EAL domain.

As to quaternary structure, homodimer. The cofactor is Mg(2+).

The protein localises to the cell inner membrane. The catalysed reaction is 2 GTP = 3',3'-c-di-GMP + 2 diphosphate. The protein operates within purine metabolism; 3',5'-cyclic di-GMP biosynthesis. Its function is as follows. Catalyzes the synthesis of cyclic-di-GMP (c-di-GMP) via the condensation of 2 GTP molecules. Involved in the control of the switch from cell motility to adhesion via regulation of cellular levels of c-di-GMP. Part of a signaling cascade that regulates curli biosynthesis. The cascade is composed of two c-di-GMP control modules, in which c-di-GMP controlled by the DgcE/PdeH pair (module I) regulates the activity of the DgcM/PdeR pair (module II), which in turn regulates activity of the transcription factor MlrA and expression of the master biofilm regulator csgD. This Escherichia coli (strain K12) protein is Probable diguanylate cyclase DgcE.